Here is a 193-residue protein sequence, read N- to C-terminus: Large ribosomal subunit protein uL5 (193 aa).

This sequence belongs to the universal ribosomal protein uL5 family. In terms of assembly, part of the 50S ribosomal subunit; part of the 5S rRNA/L5/L18/L25 subcomplex. Contacts the 5S rRNA and the P site tRNA. Forms a bridge to the 30S subunit in the 70S ribosome.

Its function is as follows. This is one of the proteins that bind and probably mediate the attachment of the 5S RNA into the large ribosomal subunit, where it forms part of the central protuberance. In the 70S ribosome it contacts protein S13 of the 30S subunit (bridge B1b), connecting the 2 subunits; this bridge is implicated in subunit movement. Contacts the P site tRNA; the 5S rRNA and some of its associated proteins might help stabilize positioning of ribosome-bound tRNAs. The polypeptide is Large ribosomal subunit protein uL5 (Novosphingobium aromaticivorans (strain ATCC 700278 / DSM 12444 / CCUG 56034 / CIP 105152 / NBRC 16084 / F199)).